The primary structure comprises 782 residues: Probable methionine--tRNA ligase, cytoplasmic (782 aa).

The short motif at 231-241 (PYVNNVPHLGN) is the 'HIGH' region element. The short motif at 551–555 (KFSKS) is the 'KMSKS' region element.

The protein belongs to the class-I aminoacyl-tRNA synthetase family.

Its subcellular location is the cytoplasm. It carries out the reaction tRNA(Met) + L-methionine + ATP = L-methionyl-tRNA(Met) + AMP + diphosphate. The sequence is that of Probable methionine--tRNA ligase, cytoplasmic (rar1) from Schizosaccharomyces pombe (strain 972 / ATCC 24843) (Fission yeast).